A 372-amino-acid polypeptide reads, in one-letter code: NAD(P)H-quinone oxidoreductase subunit 1 (372 aa).

The next 8 membrane-spanning stretches (helical) occupy residues 27-47 (LIWLPLPMLLVLTAAMVGVLV), 97-117 (LLFTLGPVLVLVPVILSWLIV), 128-148 (VGIGIFLWISLSSIQPIGLLM), 166-186 (AAQSISYEIPLALAVLAVVMM), 204-224 (LLSWNVWRQPVGFLIFWICAL), 266-286 (VLSSLLVAVLYLGGWGFPIPV), 308-328 (SVGIVMTVLKAYLLVFLAILL), and 347-367 (FLLPIALGNLLITAALKLAFP).

The protein belongs to the complex I subunit 1 family. In terms of assembly, NDH-1 is composed of at least 11 different subunits.

It localises to the cellular thylakoid membrane. The enzyme catalyses a plastoquinone + NADH + (n+1) H(+)(in) = a plastoquinol + NAD(+) + n H(+)(out). It catalyses the reaction a plastoquinone + NADPH + (n+1) H(+)(in) = a plastoquinol + NADP(+) + n H(+)(out). In terms of biological role, NDH-1 shuttles electrons from an unknown electron donor, via FMN and iron-sulfur (Fe-S) centers, to quinones in the respiratory and/or the photosynthetic chain. The immediate electron acceptor for the enzyme in this species is believed to be plastoquinone. Couples the redox reaction to proton translocation, and thus conserves the redox energy in a proton gradient. This Prochlorococcus marinus (strain MIT 9313) protein is NAD(P)H-quinone oxidoreductase subunit 1.